We begin with the raw amino-acid sequence, 53 residues long: Conotoxin Ac4.3b (53 aa).

Positions 1–11 (SDVRNAAVHER) are excised as a propeptide. Residue Gln-12 is modified to Pyrrolidone carboxylic acid. 4-carboxyglutamate is present on Glu-14. An O-linked (HexNAc...) serine glycan is attached at Ser-18. Pro-28, Pro-33, and Pro-48 each carry 4-hydroxyproline. At Pro-48 the chain carries Proline amide. Positions 49-53 (GRRND) are excised as a propeptide.

This sequence belongs to the conotoxin A superfamily. Post-translationally, contains 3 disulfide bonds. Expressed by the venom duct.

It is found in the secreted. In terms of biological role, probable neurotoxin with ion channel inhibitor activity. The sequence is that of Conotoxin Ac4.3b from Conus achatinus (Little frog cone).